The chain runs to 168 residues: Acetolactate synthase small subunit (168 aa).

Residues 7–82 (TLSVLVEDKP…VIKIVEQDDE (76 aa)) form the ACT domain.

This sequence belongs to the acetolactate synthase small subunit family. Dimer of large and small chains.

It carries out the reaction 2 pyruvate + H(+) = (2S)-2-acetolactate + CO2. The protein operates within amino-acid biosynthesis; L-isoleucine biosynthesis; L-isoleucine from 2-oxobutanoate: step 1/4. It functions in the pathway amino-acid biosynthesis; L-valine biosynthesis; L-valine from pyruvate: step 1/4. This chain is Acetolactate synthase small subunit (ilvH), found in Mycobacterium bovis (strain ATCC BAA-935 / AF2122/97).